The sequence spans 63 residues: Beta-defensin 5 (63 aa).

Positions 1–22 (MRIHYLLFSFLLVLLSPLSVFT) are cleaved as a signal peptide. A Pyrrolidone carboxylic acid modification is found at Gln-23. 3 cysteine pairs are disulfide-bonded: Cys-31/Cys-59, Cys-38/Cys-52, and Cys-42/Cys-60.

Belongs to the beta-defensin family.

Its subcellular location is the secreted. Its function is as follows. Has antibacterial activity. This Rattus norvegicus (Rat) protein is Beta-defensin 5 (Defb5).